The following is a 229-amino-acid chain: Potassium/proton antiporter CemA (229 aa).

3 consecutive transmembrane segments (helical) span residues 7 to 27 (LNPL…SLSF), 106 to 126 (IILH…YSIL), and 189 to 209 (IISG…KYWI).

Belongs to the CemA family.

The protein resides in the plastid. It localises to the chloroplast inner membrane. The enzyme catalyses K(+)(in) + H(+)(out) = K(+)(out) + H(+)(in). Its function is as follows. Contributes to K(+)/H(+) antiport activity by supporting proton efflux to control proton extrusion and homeostasis in chloroplasts in a light-dependent manner to modulate photosynthesis. Prevents excessive induction of non-photochemical quenching (NPQ) under continuous-light conditions. Indirectly promotes efficient inorganic carbon uptake into chloroplasts. This chain is Potassium/proton antiporter CemA, found in Nymphaea alba (White water-lily).